Here is a 255-residue protein sequence, read N- to C-terminus: 5-oxoprolinase subunit A 2 (255 aa).

This sequence belongs to the LamB/PxpA family. In terms of assembly, forms a complex composed of PxpA, PxpB and PxpC.

It carries out the reaction 5-oxo-L-proline + ATP + 2 H2O = L-glutamate + ADP + phosphate + H(+). Its function is as follows. Catalyzes the cleavage of 5-oxoproline to form L-glutamate coupled to the hydrolysis of ATP to ADP and inorganic phosphate. The protein is 5-oxoprolinase subunit A 2 of Agrobacterium fabrum (strain C58 / ATCC 33970) (Agrobacterium tumefaciens (strain C58)).